A 98-amino-acid polypeptide reads, in one-letter code: PE family immunomodulator PE35 (98 aa).

Positions 1–90 (MEKMSHDPIA…DVARTYSQID (90 aa)) constitute a PE domain.

This sequence belongs to the mycobacterial PE family. In terms of assembly, interacts with PPE68. PE35/PPE68 complex interacts with human TLR2.

It localises to the secreted. Its subcellular location is the cell surface. Functionally, plays a major role in RD1-associated pathogenesis, and may contribute to the establishment and maintenance of M.tuberculosis infection. Together with PPE68, stimulates the secretion of IL-10 and MCP-1 from human macrophages, via the interaction with human Toll-like receptor 2 (TLR2). The protein is PE family immunomodulator PE35 (PE35) of Mycobacterium tuberculosis (strain CDC 1551 / Oshkosh).